The sequence spans 138 residues: Small ribosomal subunit protein uS11c (138 aa).

Belongs to the universal ribosomal protein uS11 family. In terms of assembly, part of the 30S ribosomal subunit.

Its subcellular location is the plastid. It localises to the chloroplast. The polypeptide is Small ribosomal subunit protein uS11c (Phalaenopsis aphrodite subsp. formosana (Moth orchid)).